The primary structure comprises 124 residues: Small ribosomal subunit protein uS12 (124 aa).

The interval 1 to 32 is disordered; it reads MPTIQQLVRKGREDKVVKTKTPALKGSPQRRG. D89 is modified (3-methylthioaspartic acid). The interval 105 to 124 is disordered; that stretch reads QGVKNRKQARSRYGAKKEKS. Residues 108 to 118 are compositionally biased toward basic residues; it reads KNRKQARSRYG.

The protein belongs to the universal ribosomal protein uS12 family. In terms of assembly, part of the 30S ribosomal subunit. Contacts proteins S8 and S17. May interact with IF1 in the 30S initiation complex.

Its function is as follows. With S4 and S5 plays an important role in translational accuracy. Interacts with and stabilizes bases of the 16S rRNA that are involved in tRNA selection in the A site and with the mRNA backbone. Located at the interface of the 30S and 50S subunits, it traverses the body of the 30S subunit contacting proteins on the other side and probably holding the rRNA structure together. The combined cluster of proteins S8, S12 and S17 appears to hold together the shoulder and platform of the 30S subunit. The protein is Small ribosomal subunit protein uS12 of Kineococcus radiotolerans (strain ATCC BAA-149 / DSM 14245 / SRS30216).